A 123-amino-acid polypeptide reads, in one-letter code: Large ribosomal subunit protein bL12 (123 aa).

The protein belongs to the bacterial ribosomal protein bL12 family. As to quaternary structure, homodimer. Part of the ribosomal stalk of the 50S ribosomal subunit. Forms a multimeric L10(L12)X complex, where L10 forms an elongated spine to which 2 to 4 L12 dimers bind in a sequential fashion. Binds GTP-bound translation factors.

Functionally, forms part of the ribosomal stalk which helps the ribosome interact with GTP-bound translation factors. Is thus essential for accurate translation. The protein is Large ribosomal subunit protein bL12 of Parvibaculum lavamentivorans (strain DS-1 / DSM 13023 / NCIMB 13966).